Reading from the N-terminus, the 655-residue chain is p-hydroxybenzoic acid efflux pump subunit AaeB (655 aa).

The next 11 membrane-spanning stretches (helical) occupy residues 13-33 (FAVK…HFQL), 38-58 (WAVL…GGEP), 69-89 (LRII…ILMI), 93-113 (LLMV…SSLV), 121-141 (WGLA…EPLL), 152-172 (EIVI…PRSI), 370-390 (LFWL…IAVV), 407-427 (FLYG…VILP), 431-451 (QSML…GIEV), 459-479 (LGAL…TFHF), and 482-502 (FLDS…VILL).

It belongs to the aromatic acid exporter ArAE (TC 2.A.85) family.

It is found in the cell inner membrane. Its function is as follows. Forms an efflux pump with AaeA. Could function as a metabolic relief valve, allowing to eliminate certain compounds when they accumulate to high levels in the cell. This Enterobacter cloacae subsp. cloacae (strain ATCC 13047 / DSM 30054 / NBRC 13535 / NCTC 10005 / WDCM 00083 / NCDC 279-56) protein is p-hydroxybenzoic acid efflux pump subunit AaeB.